Reading from the N-terminus, the 462-residue chain is Cytochrome b558/566 subunit A (462 aa).

Residues 1–8 (MSLKIKSK) are Cytoplasmic-facing. Residues 9-26 (ITIGVLLIIFLLSIIFTL) traverse the membrane as a helical segment. Residues 27-431 (ENVSLAQTSP…TSTSPVTTIS (405 aa)) are Extracellular-facing. N-linked (GlcNAc...) asparagine glycosylation is found at Asn-28, Asn-65, Asn-91, Asn-121, Asn-144, Asn-164, Asn-174, Asn-183, Asn-211, Asn-278, Asn-279, Asn-293, Asn-316, Asn-339, Asn-353, and Asn-376. The chain crosses the membrane as a helical span at residues 432–456 (SAIPPVTLYVTIIGVVVALVALVIL). Residues 457 to 462 (YVVFRR) lie on the Cytoplasmic side of the membrane.

Requires heme as cofactor. Post-translationally, N-glycosylated on at least seven Asn residues by identical hexasaccharide units composed of Man, GlcNAc, Glc and 6-deoxy-6-sulfoglucose residues in the molar ration of 2:2:1:1. O-glycosylated on probably as many as 35 positions by single Man residues.

The protein localises to the cell membrane. In terms of biological role, monoheme cytochrome whose physiological function is not yet clear. The polypeptide is Cytochrome b558/566 subunit A (cbsA) (Sulfolobus acidocaldarius (strain ATCC 33909 / DSM 639 / JCM 8929 / NBRC 15157 / NCIMB 11770)).